A 412-amino-acid chain; its full sequence is FAD-dependent monooxygenase nscC (412 aa).

The signal sequence occupies residues 1–21 (MAKPQATVLIIGAGISGLTTS). Glutamate 35 and alanine 46 together coordinate FAD. The N-linked (GlcNAc...) asparagine glycan is linked to asparagine 92. Arginine 119 provides a ligand contact to FAD. Residues asparagine 170 and asparagine 231 are each glycosylated (N-linked (GlcNAc...) asparagine). Residues aspartate 326 and glycine 339 each contribute to the FAD site.

This sequence belongs to the paxM FAD-dependent monooxygenase family. It depends on FAD as a cofactor.

It functions in the pathway secondary metabolite biosynthesis. Functionally, FAD-dependent monooxygenase; part of the gene cluster that mediates the biosynthesis of neosartoricin B, a prenylated anthracenone that probably exhibits T-cell antiproliferative activity, suggestive of a physiological role as an immunosuppressive agent. The non-reducing polyketide synthase nscA probably synthesizes and cyclizes the decaketide backbone. The hydrolase nscB then mediates the product release through hydrolysis followed by spontaneous decarboxylation. The prenyltransferase nscD catalyzes the addition of the dimethylallyl group to the aromatic C5. The FAD-dependent monooxygenase nscC is then responsible for the stereospecific hydroxylation at C2. Neosartoricin B can be converted into two additional compounds neosartoricins C and D. Neosartoricin C is a spirocyclic compound that is cyclized through the attack of C3 hydroxyl on C14, followed by dehydration. On the other hand, neosartoricin D is a further cyclized compound in which attack of C2 on C14 in neosartoricin C results in the formation of the acetal-containing dioxabicyclo-octanone ring. Both of these compounds are novel and possibly represent related metabolites of the gene cluster. In Arthroderma otae (strain ATCC MYA-4605 / CBS 113480) (Microsporum canis), this protein is FAD-dependent monooxygenase nscC.